Reading from the N-terminus, the 97-residue chain is uncharacterized protein (97 aa).

This is an uncharacterized protein from Schizosaccharomyces pombe (strain 972 / ATCC 24843) (Fission yeast).